The primary structure comprises 453 residues: O-methyltransferase bik3 (453 aa).

The tract at residues 1 to 25 is disordered; it reads MVSNGISNGTNGTNGTTTNGTNGVN. Residues 8 to 25 are compositionally biased toward low complexity; it reads NGTNGTNGTTTNGTNGVN. An S-adenosyl-L-methionine-binding site is contributed by aspartate 305. The active-site Proton acceptor is the histidine 355.

This sequence belongs to the class I-like SAM-binding methyltransferase superfamily. Cation-independent O-methyltransferase family. COMT subfamily.

It participates in secondary metabolite biosynthesis. In terms of biological role, O-methyltransferase; part of the gene cluster that mediates the biosynthesis of bikaverin, a red pigment also considered as a mycotoxin. The first stage is catalyzed by the polyketide synthase bik1, which catalyzes the formation of the intermediate SMA76a also knowm as pre-bikaverin. FAD-dependent monooxygenase bik2 might then be responsible for the oxidation of pre-bikaverin to oxo-pre-bikaverin which is in turn methylated by the O-methyltransferase bik3 to me-oxo-pre-bikaverin. A further cycle of oxydation and methylation by bik2 and bik3 leads to the final product of bikaverin, via a nor-bikaverin intermediate. This Gibberella fujikuroi (strain CBS 195.34 / IMI 58289 / NRRL A-6831) (Bakanae and foot rot disease fungus) protein is O-methyltransferase bik3.